A 79-amino-acid chain; its full sequence is Cytochrome b-c1 complex subunit 10 (79 aa).

Residues 1-23 are Mitochondrial matrix-facing; it reads MISFFPNKPMYHVQPHISFITPE. Residues 24-47 traverse the membrane as a helical segment; the sequence is RTMKTIPAFSRWAFAAVAGVFVFA. Residues 48–79 lie on the Mitochondrial intermembrane side of the membrane; the sequence is MQVPKVKTTILQPIAFIGDHFKDKTPEEDKWL.

Belongs to the UQCR11/QCR10 family. In terms of assembly, component of the ubiquinol-cytochrome c oxidoreductase (cytochrome b-c1 complex, complex III, CIII), a multisubunit enzyme composed of 3 respiratory subunits cytochrome b, cytochrome c1 and Rieske protein, 2 core protein subunits, and additional low-molecular weight protein subunits. The complex exists as an obligatory dimer and forms supercomplexes (SCs) in the inner mitochondrial membrane with cytochrome c oxidase (complex IV, CIV).

The protein resides in the mitochondrion inner membrane. Component of the ubiquinol-cytochrome c oxidoreductase, a multisubunit transmembrane complex that is part of the mitochondrial electron transport chain which drives oxidative phosphorylation. The respiratory chain contains 3 multisubunit complexes succinate dehydrogenase (complex II, CII), ubiquinol-cytochrome c oxidoreductase (cytochrome b-c1 complex, complex III, CIII) and cytochrome c oxidase (complex IV, CIV), that cooperate to transfer electrons derived from NADH and succinate to molecular oxygen, creating an electrochemical gradient over the inner membrane that drives transmembrane transport and the ATP synthase. The cytochrome b-c1 complex catalyzes electron transfer from ubiquinol to cytochrome c, linking this redox reaction to translocation of protons across the mitochondrial inner membrane, with protons being carried across the membrane as hydrogens on the quinol. In the process called Q cycle, 2 protons are consumed from the matrix, 4 protons are released into the intermembrane space and 2 electrons are passed to cytochrome c. QCR10 has a role in CIII assembly and RIP1 stability. This is Cytochrome b-c1 complex subunit 10 from Schizosaccharomyces pombe (strain 972 / ATCC 24843) (Fission yeast).